Consider the following 1431-residue polypeptide: Gag-Pol polyprotein (1431 aa).

Residue Gly-2 is the site of N-myristoyl glycine; by host attachment. The tract at residues 7-31 (ILRGGKLDAWERIKLKPGGKKHYMM) is interaction with Gp41. The tract at residues 8-43 (LRGGKLDAWERIKLKPGGKKHYMMKHLVWASRELER) is interaction with host CALM1. The interval 12–19 (KLDAWERI) is interaction with host AP3D1. Residues 14-33 (DAWERIKLKPGGKKHYMMKH) form an interaction with membrane phosphatidylinositol 4,5-bisphosphate and RNA region. The Nuclear export signal motif lies at 16–22 (WERIKLK). Residues 26–32 (KKHYMMK) carry the Nuclear localization signal motif. The tract at residues 73–77 (KELIS) is interaction with membrane phosphatidylinositol 4,5-bisphosphate. The interval 106 to 126 (EEQNKSQQKTQQAEAADKGKV) is disordered. Tyr-130 bears the Phosphotyrosine; by host mark. Residues 187–225 (NTVGGHQAAMQMLKDTINEEAAEWDRLHPVHAGPVAPGQ) form an interaction with human PPIA/CYPA and NUP153 region. The segment at 275–361 (YSPVSILDIK…GGPGHKARVL (87 aa)) is dimerization/Multimerization of capsid protein p24. CCHC-type zinc fingers lie at residues 387–404 (IKCF…NCRA) and 408–425 (KGCW…DCTE). Residues 437-461 (FPQGEARKSSSEQNRANSPTRRELQ) are disordered. Residues 485–489 (PQITL) form a dimerization of protease region. The 70-residue stretch at 504–573 (KEALLDTGAD…TPVNIIGRNM (70 aa)) folds into the Peptidase A2 domain. Asp-509 serves as the catalytic For protease activity; shared with dimeric partner. 2 dimerization of protease regions span residues 533 to 539 (GIGGFIK) and 572 to 584 (NMLT…LNFP). Residues 627–817 (EGKITKIGPE…PPFLWMGYEL (191 aa)) enclose the Reverse transcriptase domain. The Mg(2+) site is built by Asp-693, Asp-768, and Asp-769. Residues 810–818 (FLWMGYELH) are RT 'primer grip'. Residues 981–997 (WEAWWTDYWQATWIPEW) carry the Tryptophan repeat motif motif. In terms of domain architecture, RNase H type-1 spans 1017–1140 (IAGAETFYVD…VDKLVSSGIR (124 aa)). Mg(2+) contacts are provided by Asp-1026, Glu-1061, Asp-1081, and Asp-1132. The segment at 1146–1187 (DGINKAQEEHEKYHSNWRAMASEFNLPPIVAKEIVASCDKCQ) adopts an Integrase-type zinc-finger fold. The Zn(2+) site is built by His-1155, His-1159, Cys-1183, and Cys-1186. The region spanning 1197 to 1347 (VDCSPGIWQL…SAGERIIDII (151 aa)) is the Integrase catalytic domain. Asp-1207, Asp-1259, and Glu-1295 together coordinate Mg(2+). Residues 1366–1413 (FRVYYRDSRDPIWKGPAKLLWKGEGAVVLQDNSDIKVVPRRKVKIIKD) constitute a DNA-binding region (integrase-type).

In terms of assembly, homotrimer; further assembles as hexamers of trimers. Interacts with gp41 (via C-terminus). Interacts with host CALM1; this interaction induces a conformational change in the Matrix protein, triggering exposure of the myristate group. Interacts with host AP3D1; this interaction allows the polyprotein trafficking to multivesicular bodies during virus assembly. Part of the pre-integration complex (PIC) which is composed of viral genome, matrix protein, Vpr and integrase. Homodimer; the homodimer further multimerizes as homohexamers or homopentamers. Interacts with human PPIA/CYPA; This interaction stabilizes the capsid. Interacts with human NUP153. Interacts with host PDZD8; this interaction stabilizes the capsid. Interacts with monkey TRIM5; this interaction destabilizes the capsid. As to quaternary structure, homodimer, whose active site consists of two apposed aspartic acid residues. In terms of assembly, heterodimer of p66 RT and p51 RT (RT p66/p51). Heterodimerization of RT is essential for DNA polymerase activity. The overall folding of the subdomains is similar in p66 RT and p51 RT but the spatial arrangements of the subdomains are dramatically different. Homotetramer; may further associate as a homohexadecamer. Part of the pre-integration complex (PIC) which is composed of viral genome, matrix protein, Vpr and integrase. Interacts with human SMARCB1/INI1 and human PSIP1/LEDGF isoform 1. Interacts with human KPNA3; this interaction might play a role in nuclear import of the pre-integration complex. Interacts with human NUP153; this interaction might play a role in nuclear import of the pre-integration complex. Requires Mg(2+) as cofactor. In terms of processing, specific enzymatic cleavages by the viral protease yield mature proteins. The protease is released by autocatalytic cleavage. The polyprotein is cleaved during and after budding, this process is termed maturation. Proteolytic cleavage of p66 RT removes the RNase H domain to yield the p51 RT subunit. Nucleocapsid protein p7 might be further cleaved after virus entry. Tyrosine phosphorylated presumably in the virion by a host kinase. Phosphorylation is apparently not a major regulator of membrane association. Post-translationally, phosphorylated possibly by host MAPK1; this phosphorylation is necessary for Pin1-mediated virion uncoating. In terms of processing, methylated by host PRMT6, impairing its function by reducing RNA annealing and the initiation of reverse transcription.

The protein localises to the host cell membrane. It is found in the host endosome. The protein resides in the host multivesicular body. It localises to the virion membrane. Its subcellular location is the host nucleus. The protein localises to the host cytoplasm. It is found in the virion. The catalysed reaction is Specific for a P1 residue that is hydrophobic, and P1' variable, but often Pro.. It carries out the reaction Endohydrolysis of RNA in RNA/DNA hybrids. Three different cleavage modes: 1. sequence-specific internal cleavage of RNA. Human immunodeficiency virus type 1 and Moloney murine leukemia virus enzymes prefer to cleave the RNA strand one nucleotide away from the RNA-DNA junction. 2. RNA 5'-end directed cleavage 13-19 nucleotides from the RNA end. 3. DNA 3'-end directed cleavage 15-20 nucleotides away from the primer terminus.. It catalyses the reaction 3'-end directed exonucleolytic cleavage of viral RNA-DNA hybrid.. The enzyme catalyses DNA(n) + a 2'-deoxyribonucleoside 5'-triphosphate = DNA(n+1) + diphosphate. Protease: The viral protease is inhibited by many synthetic protease inhibitors (PIs), such as amprenavir, atazanavir, indinavir, loprinavir, nelfinavir, ritonavir and saquinavir. Use of protease inhibitors in tritherapy regimens permit more ambitious therapeutic strategies. Reverse transcriptase/ribonuclease H: RT can be inhibited either by nucleoside RT inhibitors (NRTIs) or by non nucleoside RT inhibitors (NNRTIs). NRTIs act as chain terminators, whereas NNRTIs inhibit DNA polymerization by binding a small hydrophobic pocket near the RT active site and inducing an allosteric change in this region. Classical NRTIs are abacavir, adefovir (PMEA), didanosine (ddI), lamivudine (3TC), stavudine (d4T), tenofovir (PMPA), zalcitabine (ddC), and zidovudine (AZT). Classical NNRTIs are atevirdine (BHAP U-87201E), delavirdine, efavirenz (DMP-266), emivirine (I-EBU), and nevirapine (BI-RG-587). The tritherapies used as a basic effective treatment of AIDS associate two NRTIs and one NNRTI. Mediates, with Gag polyprotein, the essential events in virion assembly, including binding the plasma membrane, making the protein-protein interactions necessary to create spherical particles, recruiting the viral Env proteins, and packaging the genomic RNA via direct interactions with the RNA packaging sequence (Psi). Gag-Pol polyprotein may regulate its own translation, by the binding genomic RNA in the 5'-UTR. At low concentration, the polyprotein would promote translation, whereas at high concentration, the polyprotein would encapsidate genomic RNA and then shut off translation. In terms of biological role, targets the polyprotein to the plasma membrane via a multipartite membrane-binding signal, that includes its myristoylated N-terminus. Matrix protein is part of the pre-integration complex. Implicated in the release from host cell mediated by Vpu. Binds to RNA. Functionally, forms the conical core that encapsulates the genomic RNA-nucleocapsid complex in the virion. Most core are conical, with only 7% tubular. The core is constituted by capsid protein hexamer subunits. The core is disassembled soon after virion entry. Host restriction factors such as TRIM5-alpha or TRIMCyp bind retroviral capsids and cause premature capsid disassembly, leading to blocks in reverse transcription. Capsid restriction by TRIM5 is one of the factors which restricts HIV-1 to the human species. Host PIN1 apparently facilitates the virion uncoating. On the other hand, interactions with PDZD8 or CYPA stabilize the capsid. Its function is as follows. Encapsulates and protects viral dimeric unspliced genomic RNA (gRNA). Binds these RNAs through its zinc fingers. Acts as a nucleic acid chaperone which is involved in rearangement of nucleic acid secondary structure during gRNA retrotranscription. Also facilitates template switch leading to recombination. As part of the polyprotein, participates in gRNA dimerization, packaging, tRNA incorporation and virion assembly. Aspartyl protease that mediates proteolytic cleavages of Gag and Gag-Pol polyproteins during or shortly after the release of the virion from the plasma membrane. Cleavages take place as an ordered, step-wise cascade to yield mature proteins. This process is called maturation. Displays maximal activity during the budding process just prior to particle release from the cell. Also cleaves Nef and Vif, probably concomitantly with viral structural proteins on maturation of virus particles. Hydrolyzes host EIF4GI and PABP1 in order to shut off the capped cellular mRNA translation. The resulting inhibition of cellular protein synthesis serves to ensure maximal viral gene expression and to evade host immune response. Also mediates cleavage of host YTHDF3. Mediates cleavage of host CARD8, thereby activating the CARD8 inflammasome, leading to the clearance of latent HIV-1 in patient CD4(+) T-cells after viral reactivation; in contrast, HIV-1 can evade CARD8-sensing when its protease remains inactive in infected cells prior to viral budding. In terms of biological role, multifunctional enzyme that converts the viral RNA genome into dsDNA in the cytoplasm, shortly after virus entry into the cell. This enzyme displays a DNA polymerase activity that can copy either DNA or RNA templates, and a ribonuclease H (RNase H) activity that cleaves the RNA strand of RNA-DNA heteroduplexes in a partially processive 3' to 5' endonucleasic mode. Conversion of viral genomic RNA into dsDNA requires many steps. A tRNA(3)-Lys binds to the primer-binding site (PBS) situated at the 5'-end of the viral RNA. RT uses the 3' end of the tRNA primer to perform a short round of RNA-dependent minus-strand DNA synthesis. The reading proceeds through the U5 region and ends after the repeated (R) region which is present at both ends of viral RNA. The portion of the RNA-DNA heteroduplex is digested by the RNase H, resulting in a ssDNA product attached to the tRNA primer. This ssDNA/tRNA hybridizes with the identical R region situated at the 3' end of viral RNA. This template exchange, known as minus-strand DNA strong stop transfer, can be either intra- or intermolecular. RT uses the 3' end of this newly synthesized short ssDNA to perform the RNA-dependent minus-strand DNA synthesis of the whole template. RNase H digests the RNA template except for two polypurine tracts (PPTs) situated at the 5'-end and near the center of the genome. It is not clear if both polymerase and RNase H activities are simultaneous. RNase H probably can proceed both in a polymerase-dependent (RNA cut into small fragments by the same RT performing DNA synthesis) and a polymerase-independent mode (cleavage of remaining RNA fragments by free RTs). Secondly, RT performs DNA-directed plus-strand DNA synthesis using the PPTs that have not been removed by RNase H as primers. PPTs and tRNA primers are then removed by RNase H. The 3' and 5' ssDNA PBS regions hybridize to form a circular dsDNA intermediate. Strand displacement synthesis by RT to the PBS and PPT ends produces a blunt ended, linear dsDNA copy of the viral genome that includes long terminal repeats (LTRs) at both ends. Functionally, catalyzes viral DNA integration into the host chromosome, by performing a series of DNA cutting and joining reactions. This enzyme activity takes place after virion entry into a cell and reverse transcription of the RNA genome in dsDNA. The first step in the integration process is 3' processing. This step requires a complex comprising the viral genome, matrix protein, Vpr and integrase. This complex is called the pre-integration complex (PIC). The integrase protein removes 2 nucleotides from each 3' end of the viral DNA, leaving recessed CA OH's at the 3' ends. In the second step, the PIC enters cell nucleus. This process is mediated through integrase and Vpr proteins, and allows the virus to infect a non dividing cell. This ability to enter the nucleus is specific of lentiviruses, other retroviruses cannot and rely on cell division to access cell chromosomes. In the third step, termed strand transfer, the integrase protein joins the previously processed 3' ends to the 5' ends of strands of target cellular DNA at the site of integration. The 5'-ends are produced by integrase-catalyzed staggered cuts, 5 bp apart. A Y-shaped, gapped, recombination intermediate results, with the 5'-ends of the viral DNA strands and the 3' ends of target DNA strands remaining unjoined, flanking a gap of 5 bp. The last step is viral DNA integration into host chromosome. This involves host DNA repair synthesis in which the 5 bp gaps between the unjoined strands are filled in and then ligated. Since this process occurs at both cuts flanking the HIV genome, a 5 bp duplication of host DNA is produced at the ends of HIV-1 integration. Alternatively, Integrase may catalyze the excision of viral DNA just after strand transfer, this is termed disintegration. The polypeptide is Gag-Pol polyprotein (gag-pol) (Homo sapiens (Human)).